The following is a 236-amino-acid chain: Small ribosomal subunit protein uS2c (236 aa).

This sequence belongs to the universal ribosomal protein uS2 family.

The protein localises to the plastid. Its subcellular location is the chloroplast. In Olimarabidopsis pumila (Dwarf rocket), this protein is Small ribosomal subunit protein uS2c (rps2).